The primary structure comprises 600 residues: Elongation factor 4 (600 aa).

A tr-type G domain is found at 5-187; sequence KYIRNFSIIA…AIINKLPAPK (183 aa). GTP is bound by residues 17–22 and 134–137; these read DHGKST and NKID.

This sequence belongs to the TRAFAC class translation factor GTPase superfamily. Classic translation factor GTPase family. LepA subfamily.

The protein resides in the cell inner membrane. It catalyses the reaction GTP + H2O = GDP + phosphate + H(+). Its function is as follows. Required for accurate and efficient protein synthesis under certain stress conditions. May act as a fidelity factor of the translation reaction, by catalyzing a one-codon backward translocation of tRNAs on improperly translocated ribosomes. Back-translocation proceeds from a post-translocation (POST) complex to a pre-translocation (PRE) complex, thus giving elongation factor G a second chance to translocate the tRNAs correctly. Binds to ribosomes in a GTP-dependent manner. The sequence is that of Elongation factor 4 from Rickettsia prowazekii (strain Madrid E).